The following is a 195-amino-acid chain: FMN-dependent NADH:quinone oxidoreductase 2 (195 aa).

Residues 16 to 18 (SVS) and 85 to 88 (MWNL) each bind FMN.

Belongs to the azoreductase type 1 family. Homodimer. It depends on FMN as a cofactor.

It carries out the reaction 2 a quinone + NADH + H(+) = 2 a 1,4-benzosemiquinone + NAD(+). The catalysed reaction is N,N-dimethyl-1,4-phenylenediamine + anthranilate + 2 NAD(+) = 2-(4-dimethylaminophenyl)diazenylbenzoate + 2 NADH + 2 H(+). Its function is as follows. Quinone reductase that provides resistance to thiol-specific stress caused by electrophilic quinones. Also exhibits azoreductase activity. Catalyzes the reductive cleavage of the azo bond in aromatic azo compounds to the corresponding amines. In Photobacterium profundum (strain SS9), this protein is FMN-dependent NADH:quinone oxidoreductase 2.